Here is a 450-residue protein sequence, read N- to C-terminus: 3-phosphoshikimate 1-carboxyvinyltransferase (450 aa).

The disordered stretch occupies residues 1-25; it reads MSAHGDPKPMTARKGGALTGTAEVP. The 3-phosphoshikimate site is built by lysine 28, serine 29, and arginine 33. A phosphoenolpyruvate-binding site is contributed by lysine 28. Residues glycine 101 and arginine 129 each coordinate phosphoenolpyruvate. 3-phosphoshikimate is bound by residues serine 174, glutamine 176, aspartate 327, and lysine 354. Glutamine 176 contacts phosphoenolpyruvate. The active-site Proton acceptor is aspartate 327. Positions 358 and 403 each coordinate phosphoenolpyruvate.

Belongs to the EPSP synthase family. As to quaternary structure, monomer.

The protein resides in the cytoplasm. It carries out the reaction 3-phosphoshikimate + phosphoenolpyruvate = 5-O-(1-carboxyvinyl)-3-phosphoshikimate + phosphate. The protein operates within metabolic intermediate biosynthesis; chorismate biosynthesis; chorismate from D-erythrose 4-phosphate and phosphoenolpyruvate: step 6/7. Functionally, catalyzes the transfer of the enolpyruvyl moiety of phosphoenolpyruvate (PEP) to the 5-hydroxyl of shikimate-3-phosphate (S3P) to produce enolpyruvyl shikimate-3-phosphate and inorganic phosphate. The polypeptide is 3-phosphoshikimate 1-carboxyvinyltransferase (Jannaschia sp. (strain CCS1)).